A 276-amino-acid chain; its full sequence is Small ribosomal subunit protein uS3 (276 aa).

The KH type-2 domain maps to 39 to 110 (IRRETMKFFK…KINIKIKEIK (72 aa)). The disordered stretch occupies residues 218-243 (DAGQVINRKSSREKSEHFDRSRVDDR). Basic and acidic residues predominate over residues 227 to 243 (SSREKSEHFDRSRVDDR).

This sequence belongs to the universal ribosomal protein uS3 family. As to quaternary structure, part of the 30S ribosomal subunit. Forms a tight complex with proteins S10 and S14.

Binds the lower part of the 30S subunit head. Binds mRNA in the 70S ribosome, positioning it for translation. In Borrelia hermsii (strain HS1 / DAH), this protein is Small ribosomal subunit protein uS3.